A 767-amino-acid polypeptide reads, in one-letter code: Two-component response regulator-like PRR73 (767 aa).

Residues 1–64 form a disordered region; that stretch reads MGSACEAGTD…EPQQTDEQKE (64 aa). The region spanning 82–200 is the Response regulatory domain; it reads RVLLVENDDS…ELKNLWQHVW (119 aa). Low complexity predominate over residues 205–214; that stretch reads SSSGSGSESG. 5 disordered regions span residues 205–272, 312–388, 476–546, 646–701, and 727–767; these read SSSG…QSSW, RWLP…NEPT, ASNQ…RGKV, ANYS…SGSG, and NFGK…DEDR. Positions 238-252 are enriched in acidic residues; that stretch reads DNEDDDDNDEDDDDL. 3 stretches are compositionally biased toward polar residues: residues 263–272, 343–361, and 488–497; these read DNGSGTQSSW, RNSS…VNPT, and CSPQDNSSEA. Positions 518-531 are enriched in low complexity; that stretch reads GSNGSSNNNDMGSS. Polar residues predominate over residues 532 to 543; sequence TKNAITKPSSNR. A compositionally biased stretch (gly residues) spans 689–700; it reads GAGGGNGSGSGS. Residues 712–754 enclose the CCT domain; the sequence is REAALNKFRQKRKVRNFGKKVRYQSRKRLAEQRPRIRGQFVRQ. The segment covering 727–738 has biased composition (basic residues); that stretch reads NFGKKVRYQSRK.

It belongs to the ARR-like family.

It localises to the nucleus. Its function is as follows. Controls photoperiodic flowering response. Seems to be one of the component of the circadian clock. Expression of several members of the ARR-like family is controlled by circadian rhythm. The particular coordinated sequential expression of PRR73, PRR37, PRR95, PRR59 and PPR1 result to circadian waves that may be at the basis of the endogenous circadian clock. This chain is Two-component response regulator-like PRR73 (PRR73), found in Oryza sativa subsp. indica (Rice).